Reading from the N-terminus, the 48-residue chain is Large ribosomal subunit protein bL33B (48 aa).

Belongs to the bacterial ribosomal protein bL33 family.

The sequence is that of Large ribosomal subunit protein bL33B (rpmG2) from Mycoplasma pneumoniae (strain ATCC 29342 / M129 / Subtype 1) (Mycoplasmoides pneumoniae).